Here is a 140-residue protein sequence, read N- to C-terminus: ATP synthase epsilon chain (140 aa).

Belongs to the ATPase epsilon chain family. As to quaternary structure, F-type ATPases have 2 components, CF(1) - the catalytic core - and CF(0) - the membrane proton channel. CF(1) has five subunits: alpha(3), beta(3), gamma(1), delta(1), epsilon(1). CF(0) has three main subunits: a, b and c.

The protein resides in the cell inner membrane. Its function is as follows. Produces ATP from ADP in the presence of a proton gradient across the membrane. This Legionella pneumophila (strain Lens) protein is ATP synthase epsilon chain.